We begin with the raw amino-acid sequence, 300 residues long: tRNA dimethylallyltransferase (300 aa).

ATP is bound at residue 11 to 18 (GPTAVGKS). 13 to 18 (TAVGKS) is a binding site for substrate. The interaction with substrate tRNA stretch occupies residues 35–38 (DSIQ).

The protein belongs to the IPP transferase family. In terms of assembly, monomer. Mg(2+) is required as a cofactor.

The enzyme catalyses adenosine(37) in tRNA + dimethylallyl diphosphate = N(6)-dimethylallyladenosine(37) in tRNA + diphosphate. Functionally, catalyzes the transfer of a dimethylallyl group onto the adenine at position 37 in tRNAs that read codons beginning with uridine, leading to the formation of N6-(dimethylallyl)adenosine (i(6)A). The sequence is that of tRNA dimethylallyltransferase from Borreliella afzelii (strain PKo) (Borrelia afzelii).